Reading from the N-terminus, the 393-residue chain is Arrestin-C (393 aa).

Basic and acidic residues predominate over residues 371-386; it reads FARQEDGGEEKQKALA. A disordered region spans residues 371–393; the sequence is FARQEDGGEEKQKALAEEGDEGS.

It belongs to the arrestin family. As to quaternary structure, homodimer; disulfide-linked in response to retinal illumination. Interacts with CXCR4; the interaction is dependent on the C-terminal phosphorylation of CXCR4 and modulates the calcium ion mobilization activity of CXCR4.

The protein localises to the photoreceptor inner segment. Its subcellular location is the cell projection. The protein resides in the cilium. It localises to the photoreceptor outer segment. Its function is as follows. May play a role in an as yet undefined retina-specific signal transduction. Could bind to photoactivated-phosphorylated red/green opsins. The chain is Arrestin-C (ARR3) from Ictidomys tridecemlineatus (Thirteen-lined ground squirrel).